The sequence spans 508 residues: Phosphoglycerate kinase A (508 aa).

12 residues coordinate (2R)-3-phosphoglycerate: V32, D33, F34, N35, R48, S70, H71, G73, R74, R224, H260, and R261. ADP is bound by residues G306 and A307. G306 contributes to the CDP binding site. Positions 307 and 308 each coordinate AMP. A307 lines the ATP pocket. A307 contacts Mg(2+). K308 contacts (2R)-3-phosphoglycerate. E311 serves as a coordination point for CDP. E311 contributes to the Mg(2+) binding site. ADP is bound by residues K312 and G330. Position 312 (K312) interacts with AMP. ATP is bound at residue K312. G330 contributes to the CDP binding site. AMP-binding residues include A331 and A403. Positions 331 and 403 each coordinate ATP. ADP-binding residues include A403 and N427. Residues G428 and F433 each contribute to the CDP site. The ADP site is built by F433, E434, E466, and S467. E434 contributes to the AMP binding site. 3 residues coordinate ATP: E434, E466, and S467. E466 contacts Mg(2+).

Belongs to the phosphoglycerate kinase family. As to quaternary structure, monomer. Mg(2+) serves as cofactor.

It carries out the reaction (2R)-3-phosphoglycerate + ATP = (2R)-3-phospho-glyceroyl phosphate + ADP. It participates in carbohydrate degradation; glycolysis; pyruvate from D-glyceraldehyde 3-phosphate: step 2/5. The protein is Phosphoglycerate kinase A of Trypanosoma brucei brucei.